We begin with the raw amino-acid sequence, 119 residues long: Protein phosphatase EYA1 (119 aa).

The protein belongs to the HAD-like hydrolase superfamily. EYA family. Mg(2+) is required as a cofactor.

The protein localises to the cytoplasm. It is found in the nucleus. It catalyses the reaction O-phospho-L-tyrosyl-[protein] + H2O = L-tyrosyl-[protein] + phosphate. The catalysed reaction is O-phospho-L-seryl-[protein] + H2O = L-seryl-[protein] + phosphate. The enzyme catalyses O-phospho-L-threonyl-[protein] + H2O = L-threonyl-[protein] + phosphate. Functions both as protein phosphatase and as transcriptional coactivator for SIX1, and probably also for other transcription factors of this family. Tyrosine phosphatase that dephosphorylates 'Tyr-142' of histone H2AX (H2AXY142ph) and promotes efficient DNA repair via the recruitment of DNA repair complexes containing MDC1. 'Tyr-142' phosphorylation of histone H2AX plays a central role in DNA repair and acts as a mark that distinguishes between apoptotic and repair responses to genotoxic stress. Its function as histone phosphatase may contribute to its function in transcription regulation during organogenesis. Also has phosphatase activity with proteins phosphorylated on Ser and Thr residues (in vitro). Required for normal embryonic development of the skeleton, kidneys and ears. In Gallus gallus (Chicken), this protein is Protein phosphatase EYA1 (EYA1).